The following is a 156-amino-acid chain: Protein FAM162A (156 aa).

Residues 37 to 57 (TNGFCSKPQESPKPPDQHTYS) form a disordered region. A required for proapoptotic activity region spans residues 78–104 (RFKKEDEIPETVSFEMLDAAKNKVRVK). A helical transmembrane segment spans residues 105 to 122 (ISYVMIALTVAGCVLMVI).

It belongs to the UPF0389 family. In terms of assembly, interacts with HSP90AB1; HSP90AB1 is essential for FAM162A mitochondrial localization and pro-apoptotic activity. Interacts with VDAC2; the interaction is probably involved in inducing mitochondrial permeability transition.

It localises to the mitochondrion membrane. Functionally, proposed to be involved in regulation of apoptosis; the exact mechanism may differ between cell types/tissues. May be involved in hypoxia-induced cell death of transformed cells implicating cytochrome C release and caspase activation (such as CASP9) and inducing mitochondrial permeability transition. May be involved in hypoxia-induced cell death of neuronal cells probably by promoting release of AIFM1 from mitochondria to cytoplasm and its translocation to the nucleus; however, the involvement of caspases has been reported conflictingly. This Bos taurus (Bovine) protein is Protein FAM162A (FAM162A).